Reading from the N-terminus, the 1042-residue chain is Sarcoplasmic/endoplasmic reticulum calcium ATPase 2 (1042 aa).

Residues 1–48 (MENAHTKTVEEVLGHFGVNESTGLSLEQVKKLKERWGSNELPAEEGKT) lie on the Cytoplasmic side of the membrane. Ser38 bears the Phosphoserine mark. Residues 49 to 69 (LLELVIEQFEDLLVRILLLAA) form a helical membrane-spanning segment. The Lumenal portion of the chain corresponds to 70-89 (CISFVLAWFEEGEETITAFV). The helical transmembrane segment at 90 to 110 (EPFVILLILVANAIVGVWQER) threads the bilayer. The Cytoplasmic segment spans residues 111-253 (NAENAIEALK…QERTPLQQKL (143 aa)). A helical transmembrane segment spans residues 254 to 273 (DEFGEQLSKVISLICIAVWI). Residues 274 to 295 (INIGHFNDPVHGGSWIRGAIYY) lie on the Lumenal side of the membrane. 3'-nitrotyrosine occurs at positions 294 and 295. Residues 296 to 313 (FKIAVALAVAAIPEGLPA) form a helical membrane-spanning segment. Val304, Ala305, Ile307, and Glu309 together coordinate Ca(2+). At 314–756 (VITTCLALGT…EEGRAIYNNM (443 aa)) the chain is on the cytoplasmic side. The active-site 4-aspartylphosphate intermediate is the Asp351. Positions 351 and 353 each coordinate Mg(2+). ATP is bound at residue Thr353. Thr441 carries the post-translational modification Phosphothreonine. The ATP site is built by Glu442, Arg489, and Lys514. Ser531 carries the post-translational modification Phosphoserine. Arg559 is a binding site for ATP. Residues 575 to 594 (MNLEDSANFIKYETNLTFVG) are interaction with HAX1. The residue at position 580 (Ser580) is a Phosphoserine. The ATP site is built by Thr624, Gly625, and Asp626. Ser663 bears the Phosphoserine mark. ATP contacts are provided by Arg677 and Lys683. Asp702 is a Mg(2+) binding site. Asn705 lines the ATP pocket. Residues 757 to 776 (KQFIRYLISSNVGEVVCIFL) traverse the membrane as a helical segment. Positions 767 and 770 each coordinate Ca(2+). At 777 to 786 (TAALGFPEAL) the chain is on the lumenal side. Residues 787–807 (IPVQLLWVNLVTDGLPATALG) traverse the membrane as a helical segment. Positions 787-807 (IPVQLLWVNLVTDGLPATALG) are interaction with PLN. An interaction with TMEM64 and PDIA3 region spans residues 788 to 1042 (PVQLLWVNLV…DTNFSDMFWS (255 aa)). Ca(2+)-binding residues include Asn795, Thr798, and Asp799. The Cytoplasmic portion of the chain corresponds to 808–827 (FNPPDLDIMNKPPRNPKEPL). Residues 828–850 (ISGWLFFRYLAIGCYVGAATVGA) form a helical membrane-spanning segment. Residues 851–896 (AAWWFIAADGGPRVTFYQLSHFLQCKEDNPDFEGVDCAVFESPYPM) are Lumenal-facing. Cys875 and Cys887 form a disulfide bridge. Residues 897–916 (TMALSVLVTIEMCNALNSLS) traverse the membrane as a helical segment. Glu907 contributes to the Ca(2+) binding site. Residues 917–929 (ENQSLLRMPPWEN) lie on the Cytoplasmic side of the membrane. A helical transmembrane segment spans residues 930–948 (IWLVGSICLSMSLHFLILY). The interval 931–942 (WLVGSICLSMSL) is interaction with PLN. Topologically, residues 949–963 (VEPLPLIFQITPLNL) are lumenal. The chain crosses the membrane as a helical span at residues 964-984 (TQWLMVLKISLPVILMDETLK). The Cytoplasmic portion of the chain corresponds to 985-1042 (FVARNYLEPGKECVQPATKSCSFSACTDGISWPFVLLIMPLVIWVYSTDTNFSDMFWS).

Belongs to the cation transport ATPase (P-type) (TC 3.A.3) family. Type IIA subfamily. In terms of assembly, interacts with sarcolipin (SLN); the interaction inhibits ATP2A2 Ca(2+) affinity. Interacts with phospholamban (PLN); the interaction inhibits ATP2A2 Ca(2+) affinity. Interacts with myoregulin (MRLN). Interacts with ARLN and ERLN; the interactions inhibit ATP2A2 Ca(2+) affinity. Interacts with STRIT1/DWORF; the interaction results in activation of ATP2A2. Interacts with the monomeric forms of SLN, PLN, ARLN, ERLN and STRI1/DWORF. Interacts with HAX1. Interacts with S100A8 and S100A9. Interacts with SLC35G1 and STIM1. Interacts with TMEM203. Interacts with TMEM64 and PDIA3. Interacts with TMX1. Interacts with TMX2. Interacts with VMP1; VMP1 competes with PLN and SLN to prevent them from forming an inhibitory complex with ATP2A2. Interacts with ULK1. Interacts with S100A1 in a Ca(2+)-dependent manner. Interacts with TUNAR. Interacts with FLVCR2; this interaction occurs in the absence of heme and promotes ATP2A2 proteasomal degradation; this complex is dissociated upon heme binding. Interacts with FNIP1. As to quaternary structure, interacts with TRAM2 (via C-terminus). Requires Mg(2+) as cofactor. In terms of processing, nitrated under oxidative stress. Nitration on the two tyrosine residues inhibits catalytic activity. Post-translationally, serotonylated on Gln residues by TGM2 in response to hypoxia, leading to its inactivation. In terms of tissue distribution, detected in heart left ventricle (at protein level). Isoform 2 is highly expressed in heart and slow twitch skeletal muscle. Isoform 1 is widely expressed.

It localises to the endoplasmic reticulum membrane. The protein localises to the sarcoplasmic reticulum membrane. The enzyme catalyses Ca(2+)(in) + ATP + H2O = Ca(2+)(out) + ADP + phosphate + H(+). Has different conformational states with differential Ca2+ affinity. The E1 conformational state (active form) shows high Ca(2+) affinity, while the E2 state exhibits low Ca(2+) affinity. Binding of ATP allosterically increases its affinity for subsequent binding of Ca2+. Reversibly inhibited by phospholamban (PLN) at low calcium concentrations. PLN inhibits ATP2A2 Ca(2+) affinity by disrupting its allosteric activation by ATP. Inhibited by sarcolipin (SLN) and myoregulin (MRLN). The inhibition is blocked by VMP1. Enhanced by STRIT1/DWORF; STRIT1 increases activity by displacing sarcolipin (SLN), phospholamban (PLN) and myoregulin (MRLN). Stabilizes SERCA2 in its E2 state. Functionally, this magnesium-dependent enzyme catalyzes the hydrolysis of ATP coupled with the translocation of calcium from the cytosol to the sarcoplasmic reticulum lumen. Involved in autophagy in response to starvation. Upon interaction with VMP1 and activation, controls ER-isolation membrane contacts for autophagosome formation. Also modulates ER contacts with lipid droplets, mitochondria and endosomes. In coordination with FLVCR2 mediates heme-stimulated switching from mitochondrial ATP synthesis to thermogenesis. Its function is as follows. Involved in the regulation of the contraction/relaxation cycle. Acts as a regulator of TNFSF11-mediated Ca(2+) signaling pathways via its interaction with TMEM64 which is critical for the TNFSF11-induced CREB1 activation and mitochondrial ROS generation necessary for proper osteoclast generation. Association between TMEM64 and SERCA2 in the ER leads to cytosolic Ca(2+) spiking for activation of NFATC1 and production of mitochondrial ROS, thereby triggering Ca(2+) signaling cascades that promote osteoclast differentiation and activation. The protein is Sarcoplasmic/endoplasmic reticulum calcium ATPase 2 (ATP2A2) of Sus scrofa (Pig).